The following is an 862-amino-acid chain: C-type lectin domain-containing protein 161 (862 aa).

The signal sequence occupies residues 1–20; sequence MYRRTTLWFLLLFQPILVFA. Asparagine 22 and asparagine 91 each carry an N-linked (GlcNAc...) asparagine glycan. Positions 41 to 154 constitute a C-type lectin 1 domain; that stretch reads SLNACFKLYN…VGQKLPFVCT (114 aa). Cysteine 62 and cysteine 153 are oxidised to a cystine. The interval 162–291 is disordered; it reads AGPAPVHAMR…SDESSDEAYD (130 aa). Positions 198 to 218 are enriched in basic and acidic residues; the sequence is SDKKEKKEVASDKKKESKKDE. N-linked (GlcNAc...) asparagine glycosylation occurs at asparagine 222. The span at 242–252 shows a compositional bias: basic and acidic residues; sequence SDKKESSKKDE. Asparagine 258, asparagine 279, and asparagine 352 each carry an N-linked (GlcNAc...) asparagine glycan. The segment covering 265 to 283 has biased composition (low complexity); the sequence is ANAEMSASISASSANSSSD. Disordered regions lie at residues 377-437, 450-469, and 474-504; these read MTMR…SASL, ALAS…QKSA, and AVVS…IDES. Over residues 388 to 418 the composition is skewed to low complexity; that stretch reads SSSNTDSESASISESSQASEQAVMAAAMSAK. 2 stretches are compositionally biased toward basic and acidic residues: residues 455-467 and 478-491; these read SKSD…KDQK and ENKH…DPKS. Residue asparagine 559 is glycosylated (N-linked (GlcNAc...) asparagine). C-type lectin domains follow at residues 562–687 and 716–828; these read APAL…SVLC and KNGK…FVSV. A disulfide bond links cysteine 653 and cysteine 678. A glycan (N-linked (GlcNAc...) asparagine) is linked at asparagine 765. Cysteines 807 and 819 form a disulfide. 2 N-linked (GlcNAc...) asparagine glycosylation sites follow: asparagine 831 and asparagine 857.

The protein localises to the secreted. The polypeptide is C-type lectin domain-containing protein 161 (clec-161) (Caenorhabditis elegans).